A 117-amino-acid polypeptide reads, in one-letter code: Venom protein TxLP11 (117 aa).

A signal peptide spans 1–22 (MNTKTLIVVFLVCLLVSEVVLA).

In terms of processing, contains 4 disulfide bonds. In terms of tissue distribution, expressed by the venom gland.

It is found in the secreted. The polypeptide is Venom protein TxLP11 (Lychas mucronatus (Chinese swimming scorpion)).